The chain runs to 338 residues: Ketol-acid reductoisomerase (NADP(+)) (338 aa).

The KARI N-terminal Rossmann domain occupies 1–181; that stretch reads MKVYYDKDCD…GGGRTGIIET (181 aa). Residues 24–27, Arg-47, Ser-50, Thr-52, and 82–85 each bind NADP(+); these read YGSQ and DEFQ. His-107 is a catalytic residue. Residue Gly-133 coordinates NADP(+). The region spanning 182 to 327 is the KARI C-terminal knotted domain; the sequence is TFKDETETDL…EQLRSMMPWI (146 aa). Mg(2+) contacts are provided by Asp-190, Glu-194, Glu-226, and Glu-230. Ser-251 contributes to the substrate binding site.

Belongs to the ketol-acid reductoisomerase family. Mg(2+) serves as cofactor.

The enzyme catalyses (2R)-2,3-dihydroxy-3-methylbutanoate + NADP(+) = (2S)-2-acetolactate + NADPH + H(+). The catalysed reaction is (2R,3R)-2,3-dihydroxy-3-methylpentanoate + NADP(+) = (S)-2-ethyl-2-hydroxy-3-oxobutanoate + NADPH + H(+). It functions in the pathway amino-acid biosynthesis; L-isoleucine biosynthesis; L-isoleucine from 2-oxobutanoate: step 2/4. The protein operates within amino-acid biosynthesis; L-valine biosynthesis; L-valine from pyruvate: step 2/4. In terms of biological role, involved in the biosynthesis of branched-chain amino acids (BCAA). Catalyzes an alkyl-migration followed by a ketol-acid reduction of (S)-2-acetolactate (S2AL) to yield (R)-2,3-dihydroxy-isovalerate. In the isomerase reaction, S2AL is rearranged via a Mg-dependent methyl migration to produce 3-hydroxy-3-methyl-2-ketobutyrate (HMKB). In the reductase reaction, this 2-ketoacid undergoes a metal-dependent reduction by NADPH to yield (R)-2,3-dihydroxy-isovalerate. This is Ketol-acid reductoisomerase (NADP(+)) from Pseudomonas fluorescens (strain SBW25).